The following is a 108-amino-acid chain: Phosphoribosyl-ATP pyrophosphatase (108 aa).

A disordered region spans residues 88–108 (VENELDRREGRSGIEEKASRK). Residues 91 to 108 (ELDRREGRSGIEEKASRK) are compositionally biased toward basic and acidic residues.

It belongs to the PRA-PH family.

The protein resides in the cytoplasm. It catalyses the reaction 1-(5-phospho-beta-D-ribosyl)-ATP + H2O = 1-(5-phospho-beta-D-ribosyl)-5'-AMP + diphosphate + H(+). It functions in the pathway amino-acid biosynthesis; L-histidine biosynthesis; L-histidine from 5-phospho-alpha-D-ribose 1-diphosphate: step 2/9. In Paracoccus denitrificans (strain Pd 1222), this protein is Phosphoribosyl-ATP pyrophosphatase.